Consider the following 545-residue polypeptide: 1,3-beta-glucanosyltransferase ARB_07487 (545 aa).

An N-terminal signal peptide occupies residues 1–19 (MKFSSLAAATALVAGSVVA). Asn-51 and Asn-69 each carry an N-linked (GlcNAc...) asparagine glycan. Cys-88 and Cys-117 are joined by a disulfide. Residues Tyr-106, 133–141 (SEPSTSIIR), Asn-174, and Glu-175 contribute to the (1,3-beta-D-glucosyl)n site. The Proton donor role is filled by Glu-175. Asn-179 carries an N-linked (GlcNAc...) asparagine glycan. (1,3-beta-D-glucosyl)n is bound by residues Asp-216 and Arg-221. Disulfide bonds link Cys-230-Cys-363, Cys-248-Cys-279, Cys-384-Cys-437, Cys-393-Cys-464, and Cys-412-Cys-419. Glu-276 acts as the Nucleophile in catalysis. Tyr-308 lines the (1,3-beta-D-glucosyl)n pocket. The interval 493–513 (GTGSVTSAPGSGGNKPDQGAA) is disordered. Residue Ala-512 is the site of GPI-anchor amidated alanine attachment. Residues 513–545 (ASTISAPSVNLGIVKLGAYIFCAVLAGAGMILI) constitute a propeptide, removed in mature form.

Belongs to the glycosyl hydrolase 72 family. In terms of processing, the GPI-anchor is attached to the protein in the endoplasmic reticulum and serves to target the protein to the cell surface. There, the glucosamine-inositol phospholipid moiety is cleaved off and the GPI-modified mannoprotein is covalently attached via its lipidless GPI glycan remnant to the 1,6-beta-glucan of the outer cell wall layer.

The protein resides in the secreted. The protein localises to the cell membrane. Its subcellular location is the cell wall. Splits internally a 1,3-beta-glucan molecule and transfers the newly generated reducing end (the donor) to the non-reducing end of another 1,3-beta-glucan molecule (the acceptor) forming a 1,3-beta linkage, resulting in the elongation of 1,3-beta-glucan chains in the cell wall. Involved in cell wall biosynthesis and morphogenesis. The chain is 1,3-beta-glucanosyltransferase ARB_07487 from Arthroderma benhamiae (strain ATCC MYA-4681 / CBS 112371) (Trichophyton mentagrophytes).